Here is a 336-residue protein sequence, read N- to C-terminus: tRNA N6-adenosine threonylcarbamoyltransferase (336 aa).

Histidine 110 and histidine 114 together coordinate Fe cation. Substrate contacts are provided by residues 133–137, aspartate 166, glycine 179, and asparagine 271; that span reads LVSGK. Residue aspartate 300 coordinates Fe cation.

It belongs to the KAE1 / TsaD family. The cofactor is Fe(2+).

The protein resides in the cytoplasm. The catalysed reaction is L-threonylcarbamoyladenylate + adenosine(37) in tRNA = N(6)-L-threonylcarbamoyladenosine(37) in tRNA + AMP + H(+). Its function is as follows. Required for the formation of a threonylcarbamoyl group on adenosine at position 37 (t(6)A37) in tRNAs that read codons beginning with adenine. Is involved in the transfer of the threonylcarbamoyl moiety of threonylcarbamoyl-AMP (TC-AMP) to the N6 group of A37, together with TsaE and TsaB. TsaD likely plays a direct catalytic role in this reaction. The polypeptide is tRNA N6-adenosine threonylcarbamoyltransferase (Buchnera aphidicola subsp. Acyrthosiphon pisum (strain 5A)).